The sequence spans 618 residues: DNA mismatch repair protein MutL (618 aa).

This sequence belongs to the DNA mismatch repair MutL/HexB family.

In terms of biological role, this protein is involved in the repair of mismatches in DNA. It is required for dam-dependent methyl-directed DNA mismatch repair. May act as a 'molecular matchmaker', a protein that promotes the formation of a stable complex between two or more DNA-binding proteins in an ATP-dependent manner without itself being part of a final effector complex. In Bradyrhizobium sp. (strain BTAi1 / ATCC BAA-1182), this protein is DNA mismatch repair protein MutL.